Consider the following 394-residue polypeptide: Ornithine aminotransferase 1 (394 aa).

The residue at position 252 (K252) is an N6-(pyridoxal phosphate)lysine.

It belongs to the class-III pyridoxal-phosphate-dependent aminotransferase family. OAT subfamily. The cofactor is pyridoxal 5'-phosphate.

Its subcellular location is the cytoplasm. It catalyses the reaction a 2-oxocarboxylate + L-ornithine = L-glutamate 5-semialdehyde + an L-alpha-amino acid. Its pathway is amino-acid biosynthesis; L-proline biosynthesis; L-glutamate 5-semialdehyde from L-ornithine: step 1/1. Functionally, catalyzes the interconversion of ornithine to glutamate semialdehyde. In Staphylococcus aureus (strain COL), this protein is Ornithine aminotransferase 1.